A 396-amino-acid polypeptide reads, in one-letter code: NADH-quinone oxidoreductase subunit D 1 (396 aa).

Belongs to the complex I 49 kDa subunit family. In terms of assembly, NDH-1 is composed of 14 different subunits. Subunits NuoB, C, D, E, F, and G constitute the peripheral sector of the complex.

It localises to the cell inner membrane. The catalysed reaction is a quinone + NADH + 5 H(+)(in) = a quinol + NAD(+) + 4 H(+)(out). Its function is as follows. NDH-1 shuttles electrons from NADH, via FMN and iron-sulfur (Fe-S) centers, to quinones in the respiratory chain. The immediate electron acceptor for the enzyme in this species is believed to be ubiquinone. Couples the redox reaction to proton translocation (for every two electrons transferred, four hydrogen ions are translocated across the cytoplasmic membrane), and thus conserves the redox energy in a proton gradient. In Rhizobium etli (strain ATCC 51251 / DSM 11541 / JCM 21823 / NBRC 15573 / CFN 42), this protein is NADH-quinone oxidoreductase subunit D 1.